The following is a 237-amino-acid chain: DCN1-like protein 5 (237 aa).

The residue at position 41 (Ser41) is a Phosphoserine. The DCUN1 domain maps to 46–232; sequence FSRKKCLAWF…LLDEFVEWQK (187 aa).

In terms of assembly, part of a complex that contains DCUN1D5, CUL1 and RBX1; this interaction is bridged by CUL1. Interacts (via the DCUN1 domain) with the unneddylated cullins: interacts with CUL1, CUL2, CUL3, CUL4A, CUL4B and CUL5; these interactions promote the cullin neddylation and the identity of the cullin dictates the affinity of the interaction. Interacts (via DCUN1 domain) with UBE2M (N-terminally acetylated form) and probably with UBE2F (N-terminally acetylated form). May also interact with regulators or subunits of cullin-RING ligases such as RBX1, RNF7, ELOB and DDB1; these interactions are bridged by cullins. Interacts with CAND1; this interaction is bridged by cullins and strongly inhibits the neddylation of cullins. These CAND-cullin-DCNL complexes can only be neddylated in the presence of a substrate adapter. In terms of processing, phosphorylation at Ser-41 is independent of cullin's interaction. Phosphorylated in response to both TICAM1 and MYD88 dependent Toll-like receptor (TLR) pathway activation. Phosphorylated in response to IL1B stimulation.

It localises to the nucleus. The protein localises to the cytoplasm. It is found in the cytoskeleton. Its subcellular location is the spindle. Its function is as follows. Contributes to the neddylation of all cullins by transferring NEDD8 from N-terminally acetylated NEDD8-conjugating E2s enzyme to different cullin C-terminal domain-RBX complexes which is necessary for the activation of cullin-RING E3 ubiquitin ligases (CRLs). May play a role in DNA damage response and may participate in cell proliferation and anchorage-independent cell growth. This is DCN1-like protein 5 from Rattus norvegicus (Rat).